The following is a 362-amino-acid chain: Peptide chain release factor 1 (362 aa).

The residue at position 232 (Gln232) is an N5-methylglutamine.

This sequence belongs to the prokaryotic/mitochondrial release factor family. Post-translationally, methylated by PrmC. Methylation increases the termination efficiency of RF1.

The protein localises to the cytoplasm. Peptide chain release factor 1 directs the termination of translation in response to the peptide chain termination codons UAG and UAA. The sequence is that of Peptide chain release factor 1 from Myxococcus xanthus.